The sequence spans 323 residues: Protein translocase subunit SecF (323 aa).

The Cytoplasmic portion of the chain corresponds to 1–22 (MAQEYTVEQLNHGRKVYDFMRW). The helical transmembrane segment at 23–43 (DYWAFGISGLLLIAAIVIMGV) threads the bilayer. Over 44-142 (RGFNWGLDFT…FVGPSVGADL (99 aa)) the chain is Periplasmic. A helical membrane pass occupies residues 143–163 (AQTGAMALMAALLSILVYVGF). Topologically, residues 164-170 (RFEWRLA) are cytoplasmic. Residues 171–191 (AGVVIALAHDVIITLGILSLF) form a helical membrane-spanning segment. The Periplasmic segment spans residues 192 to 196 (HIEID). The helical transmembrane segment at 197-217 (LTIVASLMSVIGYSLNDSIVV) threads the bilayer. Residues 218–247 (SDRIRENFRKIRRGTPYEIFNVSLTQTLHR) lie on the Cytoplasmic side of the membrane. Residues 248 to 270 (TLITSGTTLMVILMLYLFGGPVL) form a helical membrane-spanning segment. Residues 271–280 (EGFSLTMLIG) are Periplasmic-facing. A helical transmembrane segment spans residues 281 to 301 (VSIGTASSIYVASALALKLGM). Over 302-323 (KREHMLQQKVEKEGADQPSILP) the chain is Cytoplasmic.

Belongs to the SecD/SecF family. SecF subfamily. In terms of assembly, forms a complex with SecD. Part of the essential Sec protein translocation apparatus which comprises SecA, SecYEG and auxiliary proteins SecDF-YajC and YidC.

It is found in the cell inner membrane. Functionally, part of the Sec protein translocase complex. Interacts with the SecYEG preprotein conducting channel. SecDF uses the proton motive force (PMF) to complete protein translocation after the ATP-dependent function of SecA. This chain is Protein translocase subunit SecF, found in Escherichia coli O157:H7.